Here is a 230-residue protein sequence, read N- to C-terminus: Ureidoacrylate amidohydrolase RutB (230 aa).

The active-site Proton acceptor is Asp-24. Lys-133 is a catalytic residue. Cys-166 (nucleophile) is an active-site residue.

The protein belongs to the isochorismatase family. RutB subfamily.

The enzyme catalyses (Z)-3-ureidoacrylate + H2O + H(+) = (Z)-3-aminoacrylate + NH4(+) + CO2. It carries out the reaction (Z)-3-ureidoacrylate + H2O = (Z)-3-aminoacrylate + carbamate + H(+). The catalysed reaction is (Z)-2-methylureidoacrylate + H2O + H(+) = (Z)-2-methylaminoacrylate + NH4(+) + CO2. In terms of biological role, hydrolyzes ureidoacrylate to form aminoacrylate and carbamate. The carbamate hydrolyzes spontaneously, thereby releasing one of the nitrogen atoms of the pyrimidine ring as ammonia and one of its carbon atoms as CO2. This chain is Ureidoacrylate amidohydrolase RutB, found in Escherichia coli O111:H- (strain 11128 / EHEC).